The chain runs to 307 residues: NmrA-like family domain-containing oxidoreductase flvB (307 aa).

NADP(+) contacts are provided by residues 4–9, 32–36, 53–54, 74–76, and 148–151; these read LITGAT, SSSSP, DY, STN, and YVEG.

It belongs to the NmrA-type oxidoreductase family.

It carries out the reaction (2S)-5,5-dimethyl-2,3,4,5-tetrahydropyridine-2,6-dicarboxylate + NADPH + 2 H(+) = (6S)-3,3-dimethylpiperidine-2,6-dicarboxylate + NADP(+). It catalyses the reaction (2S)-5,5-dimethyl-2,3,4,5-tetrahydropyridine-2,6-dicarboxylate + NADH + 2 H(+) = (6S)-3,3-dimethylpiperidine-2,6-dicarboxylate + NAD(+). The protein operates within secondary metabolite biosynthesis; terpenoid biosynthesis. Its function is as follows. NmrA-like family domain-containing oxidoreductase; part of the gene cluster that mediates the biosynthesis of flavunoidine, an alkaloidal terpenoid with a tetracyclic cage-like core connected to dimethylcadaverine via a C-N bond and acylated with 5,5-dimethyl-L-pipecolate. The tetracyclic core is synthesized by the terpene cyclase flvE and the cytochrome P450 monooxygenase flvD. The terpene cyclase flvE catalyzes the cyclization of farnesyl pyrophosphate (FPP) to form (1R,4R,5S)-(+)-acoradiene and the cytochrome P450 monooxygenase flvD is then responsible for oxidative conversion of (1R,4R,5S)-(+)-acoradiene into the tetracyclic cage present in the final product flavunoidine. In parallel, the N-methyltransferase flvH dimethylates L-lysine to give N,N-dimethyl-L-Lysin which is decarboxylated by flvG to afford dimethylcadaverine. The terpene cyclase-like protein flvF is the enzyme that attaches the dimethylcadaverine precusor at the C-7 of the tetracyclic cage to yield pre-flavunoidine. The cytochrome monooxygenase flvC hydroxylates the C-10 position of pre-flavunoidine whereas the NRPS flvI acylates the terpenoid core at the hydroxylated C-10 with dimethylpipecolate to yield final flavunoidine. The bifunctional enzyme flvA and the dehydrogenase flvB are responsible for the synthesis of the dimethylpipecolate precursor. The PLP-dependent lyase domain of flvA might use L-O-acetyl-homoserine and alpha-keto-isovalerate to form an intermediary ketone that can cyclize intramolecularly to yield an imine. The imine can be reduced by flvB to yield the 6-carboxylated pipecolate. The C-terminal alpha-KG-dependent oxygenase domain of flvA is then proposed to catalyze the decarboxylation to yield dimethylpipecolate. The protein is NmrA-like family domain-containing oxidoreductase flvB of Aspergillus flavus (strain ATCC 200026 / FGSC A1120 / IAM 13836 / NRRL 3357 / JCM 12722 / SRRC 167).